The primary structure comprises 176 residues: Corrinoid adenosyltransferase (176 aa).

ATP contacts are provided by residues 6–14 (TRTGDNGTT), lysine 24, 131–136 (RRLERI), and asparagine 155.

Belongs to the Cob(I)alamin adenosyltransferase family.

The protein resides in the cytoplasm. The enzyme catalyses 2 cob(II)yrinate a,c diamide + reduced [electron-transfer flavoprotein] + 2 ATP = 2 adenosylcob(III)yrinate a,c-diamide + 2 triphosphate + oxidized [electron-transfer flavoprotein] + 3 H(+). It carries out the reaction 2 cob(II)alamin + reduced [electron-transfer flavoprotein] + 2 ATP = 2 adenosylcob(III)alamin + 2 triphosphate + oxidized [electron-transfer flavoprotein] + 3 H(+). Its pathway is cofactor biosynthesis; adenosylcobalamin biosynthesis; adenosylcobalamin from cob(II)yrinate a,c-diamide: step 2/7. This Citrobacter freundii protein is Corrinoid adenosyltransferase.